A 341-amino-acid polypeptide reads, in one-letter code: ATP synthase subunit a 2 (341 aa).

Positions 1–33 are cleaved as a signal peptide; sequence MKRVKVIQIKGFFRVMALLAPLLLNAYLPVQAS. Transmembrane regions (helical) follow at residues 112–132, 173–193, 195–215, 242–262, 273–293, and 307–327; these read VVML…VGAA, LPYL…GLIP, GATA…TFFI, WIIM…ALTV, IVIL…VAAA, and IFVA…FIGL.

It belongs to the ATPase A chain family. As to quaternary structure, F-type ATPases have 2 components, CF(1) - the catalytic core - and CF(0) - the membrane proton channel. CF(1) has five subunits: alpha(3), beta(3), gamma(1), delta(1), epsilon(1). CF(0) has four main subunits: a, b, b' and c.

Its subcellular location is the cell inner membrane. Key component of the proton channel; it plays a direct role in the translocation of protons across the membrane. This Chlorobium luteolum (strain DSM 273 / BCRC 81028 / 2530) (Pelodictyon luteolum) protein is ATP synthase subunit a 2.